The following is a 425-amino-acid chain: Serine--tRNA ligase 2 (425 aa).

230–232 (TAE) contacts L-serine. 261-263 (REE) provides a ligand contact to ATP. E284 contacts L-serine. Position 348 to 351 (348 to 351 (EISS)) interacts with ATP. Position 383 (S383) interacts with L-serine.

The protein belongs to the class-II aminoacyl-tRNA synthetase family. Type-1 seryl-tRNA synthetase subfamily. Homodimer. The tRNA molecule binds across the dimer.

The protein resides in the cytoplasm. It carries out the reaction tRNA(Ser) + L-serine + ATP = L-seryl-tRNA(Ser) + AMP + diphosphate + H(+). The enzyme catalyses tRNA(Sec) + L-serine + ATP = L-seryl-tRNA(Sec) + AMP + diphosphate + H(+). It participates in aminoacyl-tRNA biosynthesis; selenocysteinyl-tRNA(Sec) biosynthesis; L-seryl-tRNA(Sec) from L-serine and tRNA(Sec): step 1/1. Catalyzes the attachment of serine to tRNA(Ser). Is also able to aminoacylate tRNA(Sec) with serine, to form the misacylated tRNA L-seryl-tRNA(Sec), which will be further converted into selenocysteinyl-tRNA(Sec). This chain is Serine--tRNA ligase 2, found in Lactiplantibacillus plantarum (strain ATCC BAA-793 / NCIMB 8826 / WCFS1) (Lactobacillus plantarum).